Reading from the N-terminus, the 280-residue chain is Chaperone for lacto-N-biosidase (280 aa).

A signal peptide spans M1 to A37.

Homodimer.

The protein localises to the secreted. Its function is as follows. Chaperone required for active expression of the lacto-N-biosidase LnbX. The polypeptide is Chaperone for lacto-N-biosidase (Bifidobacterium longum subsp. longum (strain ATCC 15707 / DSM 20219 / JCM 1217 / NCTC 11818 / E194b)).